A 76-amino-acid chain; its full sequence is Omega-scoloptoxin(13)-Ssm2a (76 aa).

A signal peptide spans 1–22 (MAYIYALIFAIVVCMNTDVIQA).

Contains 4 disulfide bonds. As to expression, expressed by the venom gland.

The protein resides in the secreted. In terms of biological role, inhibits voltage-gated calcium channel (Cav) currents in DRG neurons (IC(50)=1590 nM). In Scolopendra mutilans (Chinese red-headed centipede), this protein is Omega-scoloptoxin(13)-Ssm2a.